The chain runs to 60 residues: Large ribosomal subunit protein eL37 (60 aa).

Positions 18, 21, 33, and 36 each coordinate Zn(2+). The segment at 18–36 adopts a C4-type zinc-finger fold; it reads CRRCGKNSYHVRKKVCAAC.

Belongs to the eukaryotic ribosomal protein eL37 family. The cofactor is Zn(2+).

In terms of biological role, binds to the 23S rRNA. The polypeptide is Large ribosomal subunit protein eL37 (rpl37e) (Methanothermobacter thermautotrophicus (strain ATCC 29096 / DSM 1053 / JCM 10044 / NBRC 100330 / Delta H) (Methanobacterium thermoautotrophicum)).